The sequence spans 458 residues: ATP synthase subunit beta (458 aa).

G148–T155 contacts ATP.

The protein belongs to the ATPase alpha/beta chains family. In terms of assembly, F-type ATPases have 2 components, CF(1) - the catalytic core - and CF(0) - the membrane proton channel. CF(1) has five subunits: alpha(3), beta(3), gamma(1), delta(1), epsilon(1). CF(0) has three main subunits: a(1), b(2) and c(9-12). The alpha and beta chains form an alternating ring which encloses part of the gamma chain. CF(1) is attached to CF(0) by a central stalk formed by the gamma and epsilon chains, while a peripheral stalk is formed by the delta and b chains.

It is found in the cell inner membrane. It carries out the reaction ATP + H2O + 4 H(+)(in) = ADP + phosphate + 5 H(+)(out). Its function is as follows. Produces ATP from ADP in the presence of a proton gradient across the membrane. The catalytic sites are hosted primarily by the beta subunits. The chain is ATP synthase subunit beta from Pseudomonas entomophila (strain L48).